Consider the following 74-residue polypeptide: Putative defensin-like protein 128 (74 aa).

Residues 1–24 (MSKLTNVVIFIVFFLGMMAKETQG) form the signal peptide. 4 disulfides stabilise this stretch: cysteine 28–cysteine 72, cysteine 37–cysteine 56, cysteine 42–cysteine 66, and cysteine 46–cysteine 68.

It belongs to the DEFL family.

It localises to the secreted. This Arabidopsis thaliana (Mouse-ear cress) protein is Putative defensin-like protein 128 (LCR8).